Here is a 357-residue protein sequence, read N- to C-terminus: MSLTRLLIKDFRNIENADLALSPGFNFLVGANGSGKTSVLEAIYTLGHGRAFRSLQVGRVIRHEQESFILHGRLQGSERETSIGLTKDKQGDSKVRIDGTDGHKVAELALLMPMQLITPEGFTLLNGGPKYRRAFLDWGCFHNEAGFFNAWSNLKRLLKQRNAALRQVTRYAQVRPWDMELVPLAEQISRWRAEYSAGIAEDMADTCKQFLPEFSLTFSFQRGWEKETDYAEVLERSFERDRMLTYTAHGPHKADFRIRADGAPVEDTLSRGQLKLLMCALRLAQGEFLTRESGRRCLYLIDDFASELDDARRGLLASRLKATQSQVFVSAISAEHVLDMSDKNSKMFTVEKGKITD.

30-37 lines the ATP pocket; it reads GANGSGKT.

This sequence belongs to the RecF family.

It is found in the cytoplasm. The RecF protein is involved in DNA metabolism; it is required for DNA replication and normal SOS inducibility. RecF binds preferentially to single-stranded, linear DNA. It also seems to bind ATP. The polypeptide is DNA replication and repair protein RecF (Enterobacter sp. (strain 638)).